Here is a 174-residue protein sequence, read N- to C-terminus: Ribosome maturation factor RimM (174 aa).

The 80-residue stretch at 95–174 (DDEFYWRDLI…QIQVEWPSDF (80 aa)) folds into the PRC barrel domain.

Belongs to the RimM family. Binds ribosomal protein uS19.

The protein resides in the cytoplasm. Functionally, an accessory protein needed during the final step in the assembly of 30S ribosomal subunit, possibly for assembly of the head region. Essential for efficient processing of 16S rRNA. May be needed both before and after RbfA during the maturation of 16S rRNA. It has affinity for free ribosomal 30S subunits but not for 70S ribosomes. The sequence is that of Ribosome maturation factor RimM from Idiomarina loihiensis (strain ATCC BAA-735 / DSM 15497 / L2-TR).